The sequence spans 423 residues: Enolase (423 aa).

A (2R)-2-phosphoglycerate-binding site is contributed by Gln-166. The Proton donor role is filled by Glu-208. The Mg(2+) site is built by Asp-242, Glu-283, and Asp-310. (2R)-2-phosphoglycerate-binding residues include Lys-335, Arg-364, Ser-365, and Lys-386. Lys-335 functions as the Proton acceptor in the catalytic mechanism.

This sequence belongs to the enolase family. It depends on Mg(2+) as a cofactor.

It is found in the cytoplasm. It localises to the secreted. The protein localises to the cell surface. It carries out the reaction (2R)-2-phosphoglycerate = phosphoenolpyruvate + H2O. Its pathway is carbohydrate degradation; glycolysis; pyruvate from D-glyceraldehyde 3-phosphate: step 4/5. Its function is as follows. Catalyzes the reversible conversion of 2-phosphoglycerate (2-PG) into phosphoenolpyruvate (PEP). It is essential for the degradation of carbohydrates via glycolysis. This is Enolase from Elusimicrobium minutum (strain Pei191).